The sequence spans 111 residues: Nucleoid-associated protein glr3498 (111 aa).

It belongs to the YbaB/EbfC family. As to quaternary structure, homodimer.

It localises to the cytoplasm. The protein localises to the nucleoid. In terms of biological role, binds to DNA and alters its conformation. May be involved in regulation of gene expression, nucleoid organization and DNA protection. The protein is Nucleoid-associated protein glr3498 of Gloeobacter violaceus (strain ATCC 29082 / PCC 7421).